The following is a 148-amino-acid chain: Hemoglobin subunit gamma (148 aa).

The region spanning 3–148 (HFTAEEKAII…VAIAMGHKYH (146 aa)) is the Globin domain. His64 and His93 together coordinate heme b.

This sequence belongs to the globin family. As to quaternary structure, heterotetramer of two alpha chains and two gamma chains in fetal hemoglobin (Hb F). Red blood cells.

In terms of biological role, gamma chains make up the fetal hemoglobin F, in combination with alpha chains. In Carlito syrichta (Philippine tarsier), this protein is Hemoglobin subunit gamma (HBG).